The sequence spans 408 residues: Bone morphogenetic protein 4 (408 aa).

A signal peptide spans 1–19; that stretch reads MIPGNRMLMVVLLCQVLLG. Residues 20–292 constitute a propeptide that is removed on maturation; the sequence is GATDASLIPE…HTLTRRRAKR (273 aa). Phosphoserine is present on serine 91. The segment at 91 to 113 is disordered; the sequence is SGEEEEEEQSQGTGLEYPERPAS. 2 N-linked (GlcNAc...) asparagine glycosylation sites follow: asparagine 144 and asparagine 209. A disordered region spans residues 281 to 307; it reads RGHTLTRRRAKRSPKHHPQRSRKKNKN. Positions 284–307 are enriched in basic residues; it reads TLTRRRAKRSPKHHPQRSRKKNKN. Cystine bridges form between cysteine 308–cysteine 373, cysteine 337–cysteine 405, and cysteine 341–cysteine 407. Asparagine 350 and asparagine 365 each carry an N-linked (GlcNAc...) asparagine glycan.

This sequence belongs to the TGF-beta family. As to quaternary structure, homodimer; disulfide-linked. Interacts with GREM2. Part of a complex consisting of TWSG1 and CHRD. Interacts with the serine proteases, HTRA1 and HTRA3; the interaction with either inhibits BMP4-mediated signaling. The HTRA protease activity is required for this inhibition. Interacts with SOSTDC1. Interacts with FBN1 (via N-terminal domain) and FBN2. Interacts with type I receptor BMPR1A. Interacts with type II receptor BMPR2. Interacts with FSTL1; this interaction inhibits the activation of the BMP4/Smad1/5/8 signaling pathway. Interacts with SCUBE3. Interacts with TGFBR3.

It localises to the secreted. The protein localises to the extracellular space. The protein resides in the extracellular matrix. Functionally, growth factor of the TGF-beta superfamily that plays essential roles in many developmental processes, including neurogenesis, vascular development, angiogenesis and osteogenesis. Acts in concert with PTHLH/PTHRP to stimulate ductal outgrowth during embryonic mammary development and to inhibit hair follicle induction. Initiates the canonical BMP signaling cascade by associating with type I receptor BMPR1A and type II receptor BMPR2. Once all three components are bound together in a complex at the cell surface, BMPR2 phosphorylates and activates BMPR1A. In turn, BMPR1A propagates signal by phosphorylating SMAD1/5/8 that travel to the nucleus and act as activators and repressors of transcription of target genes. Positively regulates the expression of odontogenic development regulator MSX1 via inducing the IPO7-mediated import of SMAD1 to the nucleus. Required for MSX1-mediated mesenchymal molar tooth bud development beyond the bud stage, via promoting Wnt signaling. Acts as a positive regulator of odontoblast differentiation during mesenchymal tooth germ formation, expression is repressed during the bell stage by MSX1-mediated inhibition of CTNNB1 signaling. Able to induce its own expression in dental mesenchymal cells and also in the neighboring dental epithelial cells via an MSX1-mediated pathway. Can also signal through non-canonical BMP pathways such as ERK/MAP kinase, PI3K/Akt, or SRC cascades. For example, induces SRC phosphorylation which, in turn, activates VEGFR2, leading to an angiogenic response. This chain is Bone morphogenetic protein 4, found in Rattus norvegicus (Rat).